The primary structure comprises 204 residues: NNYCKIKCLKGGVHTACKYGSLKPNCGNKVVVSYGLTKQEKQDILKEHNDFRQKIARGLETRGNPGPQPPAKNMKNLVWNDELAYVAQVWANQCQYGHDTCRDIAKYQVGQNVALTGSTAAKYDDPVKLVKMWEDEVKDYNPKKKFSGNNFLKTGHYTQMVWANTKEVGCGSIKFIQEKWHKHYLVCNYGPSGNFQNEELYQTK.

Disulfide bonds link Cys-4-Cys-17, Cys-8-Cys-101, Cys-26-Cys-94, and Cys-170-Cys-187. One can recognise an SCP domain in the interval 45–189 (LKEHNDFRQK…WHKHYLVCNY (145 aa)).

The protein belongs to the CRISP family. Venom allergen 5-like subfamily. As to expression, expressed by the venom gland.

It localises to the secreted. Functionally, may have an ancestral function in the promotion of ovum fertilization by sperm. This Vespula flavopilosa (Downy yellowjacket) protein is Venom allergen 5.